The chain runs to 420 residues: 3-oxo-tetronate kinase (420 aa).

Residues serine 258, 360–363 (GGET), and glycine 403 contribute to the ATP site.

Belongs to the four-carbon acid sugar kinase family.

It carries out the reaction 3-dehydro-L-erythronate + ATP = 3-dehydro-4-O-phospho-L-erythronate + ADP + H(+). The catalysed reaction is 3-dehydro-D-erythronate + ATP = 3-dehydro-4-O-phospho-D-erythronate + ADP + H(+). In terms of biological role, catalyzes the ATP-dependent phosphorylation of 3-oxo-tetronate to 3-oxo-tetronate 4-phosphate. The chain is 3-oxo-tetronate kinase from Salmonella typhimurium (strain LT2 / SGSC1412 / ATCC 700720).